The sequence spans 308 residues: Tryptophan 2,3-dioxygenase (308 aa).

The interval 1 to 35 (MQPPGDNAPAGCPFSGAHAAQPAHEAPHVPGDAAG) is disordered. Over residues 17 to 30 (AHAAQPAHEAPHVP) the composition is skewed to low complexity. Residues 77–81 (FIIQH), Y139, and R143 each bind substrate. Heme is bound at residue H266. T280 contacts substrate.

The protein belongs to the tryptophan 2,3-dioxygenase family. As to quaternary structure, homotetramer. Heme serves as cofactor.

The enzyme catalyses L-tryptophan + O2 = N-formyl-L-kynurenine. Its pathway is amino-acid degradation; L-tryptophan degradation via kynurenine pathway; L-kynurenine from L-tryptophan: step 1/2. Heme-dependent dioxygenase that catalyzes the oxidative cleavage of the L-tryptophan (L-Trp) pyrrole ring and converts L-tryptophan to N-formyl-L-kynurenine. Catalyzes the oxidative cleavage of the indole moiety. In Burkholderia ambifaria (strain ATCC BAA-244 / DSM 16087 / CCUG 44356 / LMG 19182 / AMMD) (Burkholderia cepacia (strain AMMD)), this protein is Tryptophan 2,3-dioxygenase.